The primary structure comprises 430 residues: MQASIESTGNLERRLTFTLPQERLETHVGGRLRELARTTRIKGFRPGKVPTKVIEQRFGQQVRAEAMEGLLRETFDSAVREHSLRLAGNPRIDQGESDFDFVATFEVVPDFGDIDVTNLSVVRHTAEVTDADIDQMIENLRLQRRTWNPVERGAQVGDLVALETWSQAGNERLPAEGVETGSSVLGSGVMFDQIEKGLEGLSKGEDKALSIDFPADWRVPQLAGKTVQVHVKAVEVSEPVLPEVNKEFIKSFGVKSGDAEQFRADIRTNLERELKGALMNRLRREVGEQLIAAYAHVEMPPRLVENEAGSMLAQQVDQMRRSGRNPGEIPADAHQGFMDAAAKRVLVGLLVGEVARRNELRLESKRVSETLRLIASTYEEPEQVIEMYRNDPQLMSGLQSRVMEEQVIDWIAERAKHTEQSLSFQDAIRV.

The region spanning 157 to 242 (GDLVALETWS…AVEVSEPVLP (86 aa)) is the PPIase FKBP-type domain.

It belongs to the FKBP-type PPIase family. Tig subfamily.

It is found in the cytoplasm. It carries out the reaction [protein]-peptidylproline (omega=180) = [protein]-peptidylproline (omega=0). Its function is as follows. Involved in protein export. Acts as a chaperone by maintaining the newly synthesized protein in an open conformation. Functions as a peptidyl-prolyl cis-trans isomerase. The sequence is that of Trigger factor from Xanthomonas campestris pv. campestris (strain ATCC 33913 / DSM 3586 / NCPPB 528 / LMG 568 / P 25).